The following is a 364-amino-acid chain: Probable zinc transporter 10 (364 aa).

Residues 1-28 form the signal peptide; that stretch reads MTKSHVIFSASIALFLLLSISHFPGALS. At 29-52 the chain is on the extracellular side; that stretch reads QSNKDCQSKSNYSCIDKNKALDLK. A helical transmembrane segment spans residues 53–73; it reads LLSIFSILITSLIGVCLPFFA. At 74–85 the chain is on the cytoplasmic side; it reads RSIPAFQPEKSH. The helical transmembrane segment at 86–106 threads the bilayer; it reads FLIVKSFASGIILSTGFMHVL. The Extracellular portion of the chain corresponds to 107–125; that stretch reads PDSFEMLSSPCLNDNPWHK. The helical transmembrane segment at 126 to 146 threads the bilayer; it reads FPFAGFVAMMSAVFTLMVDSI. The Cytoplasmic portion of the chain corresponds to 147 to 209; sequence TTSVFTKSGR…GSYLQLLRYR (63 aa). The chain crosses the membrane as a helical span at residues 210–230; that stretch reads ILAIVLELGIVVQSIVIGLSV. Over 231–241 the chain is Extracellular; that stretch reads GDTNNTCTIKG. The chain crosses the membrane as a helical span at residues 242-262; sequence LVAALCFHQMFEGMGLGGCIL. Over 263–271 the chain is Cytoplasmic; that stretch reads QAEYGWVKK. Residues 272 to 292 form a helical membrane-spanning segment; it reads AVMAFFFAVTTPFGVVLGMAL. Topologically, residues 293-303 are extracellular; sequence SKTYKENSPES. Residues 304-324 form a helical membrane-spanning segment; sequence LITVGLLNASSAGLLIYMALV. Over 325–343 the chain is Cytoplasmic; it reads DLLAADFMGQKMQRSIKLQ. Residues 344–364 traverse the membrane as a helical segment; that stretch reads LKSYAAVLLGAGGMSVMAKWA.

It belongs to the ZIP transporter (TC 2.A.5) family.

The protein localises to the cell membrane. Probably mediates zinc uptake from the rhizosphere. This chain is Probable zinc transporter 10 (ZIP10), found in Arabidopsis thaliana (Mouse-ear cress).